Reading from the N-terminus, the 234-residue chain is Probable chemoreceptor glutamine deamidase CheD 1 (234 aa).

Belongs to the CheD family.

It catalyses the reaction L-glutaminyl-[protein] + H2O = L-glutamyl-[protein] + NH4(+). Functionally, probably deamidates glutamine residues to glutamate on methyl-accepting chemotaxis receptors (MCPs), playing an important role in chemotaxis. The sequence is that of Probable chemoreceptor glutamine deamidase CheD 1 from Albidiferax ferrireducens (strain ATCC BAA-621 / DSM 15236 / T118) (Rhodoferax ferrireducens).